The sequence spans 263 residues: MHIHSIKLPLVELKNINVVFEQKKALQNINLTLYPNSIITIVGPNGGGKSTLLKVLLKLLPPTSGQVIYHKNLRIGYVPQKIHLDHSLPITVERFLSLKKGISRQAIQDALSLLSISHLHKNSLQKLSGGEMQRVLLARAILNKPNLLVLDEPTQGVDINGQAELYQLIQQTQQQLNCAILMVSHDLNIVMADTNEVLCINQHICCAGTPETVSNDPTFIHFFGDQFAKNVALYTHKHNHKHDIHGDICCTSDFQSQQCTHKE.

Positions 11–226 (VELKNINVVF…PTFIHFFGDQ (216 aa)) constitute an ABC transporter domain. 43 to 50 (GPNGGGKS) contributes to the ATP binding site.

This sequence belongs to the ABC transporter superfamily. Zinc importer (TC 3.A.1.15.5) family. In terms of assembly, the complex is composed of two ATP-binding proteins (ZnuC), two transmembrane proteins (ZnuB) and a solute-binding protein (ZnuA).

It is found in the cell inner membrane. The enzyme catalyses Zn(2+)(out) + ATP(in) + H2O(in) = Zn(2+)(in) + ADP(in) + phosphate(in) + H(+)(in). Its function is as follows. Part of the ABC transporter complex ZnuABC involved in zinc import. Responsible for energy coupling to the transport system. The polypeptide is Zinc import ATP-binding protein ZnuC (Pasteurella multocida (strain Pm70)).